The primary structure comprises 299 residues: Bifunctional protein FolD 2 (299 aa).

NADP(+) is bound by residues 168 to 170 (GRS), S193, and I234.

It belongs to the tetrahydrofolate dehydrogenase/cyclohydrolase family. Homodimer.

It catalyses the reaction (6R)-5,10-methylene-5,6,7,8-tetrahydrofolate + NADP(+) = (6R)-5,10-methenyltetrahydrofolate + NADPH. The catalysed reaction is (6R)-5,10-methenyltetrahydrofolate + H2O = (6R)-10-formyltetrahydrofolate + H(+). Its pathway is one-carbon metabolism; tetrahydrofolate interconversion. Functionally, catalyzes the oxidation of 5,10-methylenetetrahydrofolate to 5,10-methenyltetrahydrofolate and then the hydrolysis of 5,10-methenyltetrahydrofolate to 10-formyltetrahydrofolate. This chain is Bifunctional protein FolD 2, found in Rhizobium etli (strain ATCC 51251 / DSM 11541 / JCM 21823 / NBRC 15573 / CFN 42).